The following is a 658-amino-acid chain: D-ornithine--citrate ligase (658 aa).

The protein belongs to the IucA/IucC family.

It carries out the reaction D-ornithine + citrate + ATP = N(5)-[(S)-citryl]-D-ornithine + AMP + diphosphate + H(+). Its pathway is siderophore biosynthesis. Functionally, involved in the biosynthesis of the siderophore staphyloferrin A. Catalyzes the ATP-dependent condensation of D-ornithine and citrate to form a citryl-D-ornithine intermediate. The polypeptide is D-ornithine--citrate ligase (Staphylococcus aureus (strain NCTC 8325 / PS 47)).